The chain runs to 474 residues: MKTKCICELCSCGRHHCPHLPTKIYDKTEKPCLLSEYTENYPFYHSYLPRESFKPRREYQKGPIPMEGLTTSRRDFGPHKVAPVKVHQYDQFVPSEENMDLLTTYKKDYNPYPVCRVDPIKPRDSKYPCSDKMECLPTYKADYLPWNQPRREPLRLEHKYQPASVRFDNRTTHQDDYPIKGLVKTISCKPLAMPKLCNIPLEDVTNYKMSYVAHPVEKRFVHEAEKFRPCEIPFESLTTQKQSYRGLMGEPAKSLKPLARPPGLDMPFCNTTEFRDKYQAWPMPRMFSKAPITYVPPEDRMDLLTTVQAHYTCPKGAPAQSCRPALQIKKCGRFEGSSTTKDDYKQWSSMRTEPVKPVPQLDLPTEPLDCLTTTRAHYVPHLPINTKSCKPHWSGPRGNVPVESQTTYTISFTPKEMGRCLASYPEPPGYTFEEVDALGHRIYKPVSQAGSQQSSHLSVDDSENPNQRELEVLA.

Mn regions lie at residues 30-64 (KPCL…KGPI), 65-97 (PMEG…PSEE), 98-131 (NMDL…PCSD), 132-165 (KMEC…PASV), 166-199 (RFDN…LCNI), 200-232 (PLED…PCEI), 233-266 (PFES…GLDM), 267-299 (PFCN…PPED), 300-332 (RMDL…KKCG), 333-366 (RFEG…LPTE), 367-400 (PLDC…RGNV), and 401-434 (PVES…TFEE). The tract at residues 446-474 (VSQAGSQQSSHLSVDDSENPNQRELEVLA) is disordered. The segment covering 448–457 (QAGSQQSSHL) has biased composition (polar residues).

Belongs to the FAM154 family. In terms of assembly, associates with microtubules via the Mn regions. Widely expressed, with highest levels in testis. Expressed in mature spermatozoa (at protein level).

The protein resides in the cytoplasm. It is found in the cytoskeleton. It localises to the microtubule organizing center. The protein localises to the centrosome. Its subcellular location is the centriole. The protein resides in the cilium basal body. It is found in the cilium axoneme. It localises to the flagellum axoneme. Functionally, may play a role in the regulation of cilium length. Stabilizes microtubules at low temperature. In Homo sapiens (Human), this protein is Stabilizer of axonemal microtubules 1 (SAXO1).